The following is a 42-amino-acid chain: Photosystem I reaction center subunit IX (42 aa).

Residues 7–27 form a helical membrane-spanning segment; the sequence is YLSTAPVLATIWFIILAGLLI.

This sequence belongs to the PsaJ family.

The protein localises to the plastid. The protein resides in the chloroplast thylakoid membrane. Functionally, may help in the organization of the PsaE and PsaF subunits. The sequence is that of Photosystem I reaction center subunit IX from Mesostigma viride (Green alga).